The chain runs to 224 residues: Uridylate kinase (224 aa).

Position 6–10 (6–10 (KVTGK)) interacts with ATP. G41 is a binding site for UMP. ATP-binding residues include G42 and R46. Residues D63 and 111–117 (FQPGQST) each bind UMP. ATP contacts are provided by T137, F143, and D146.

The protein belongs to the UMP kinase family. As to quaternary structure, homohexamer.

It is found in the cytoplasm. The catalysed reaction is UMP + ATP = UDP + ADP. It functions in the pathway pyrimidine metabolism; CTP biosynthesis via de novo pathway; UDP from UMP (UMPK route): step 1/1. With respect to regulation, inhibited by UTP. Its function is as follows. Catalyzes the reversible phosphorylation of UMP to UDP. This chain is Uridylate kinase, found in Metallosphaera sedula (strain ATCC 51363 / DSM 5348 / JCM 9185 / NBRC 15509 / TH2).